A 3078-amino-acid polypeptide reads, in one-letter code: Homeobox-like protein HDP1 (3078 aa).

Disordered stretches follow at residues 1–29 (MKRG…DNSN), 59–164 (LHNS…INDN), 203–306 (SKRK…NIGK), 949–980 (NAEI…QDEN), 1323–1390 (DEDS…KDRK), 1415–1445 (SSSN…NNKN), 1939–2046 (KVND…QDKF), 2115–2216 (TNES…QYNY), 2599–2637 (AYMN…DDNI), and 2959–3019 (QQNN…NNGP). The segment covering 14–29 (CPSNGMASSQRNDNSN) has biased composition (polar residues). A compositionally biased stretch (basic and acidic residues) spans 59-84 (LHNSSSRESKDMKLSEEPRHINEKCI). 2 stretches are compositionally biased toward low complexity: residues 85 to 94 (NDNNKINNNN) and 114 to 127 (NNNN…TKNN). 5 stretches are compositionally biased toward polar residues: residues 128-137 (IFFQTNNPDT), 148-157 (KQENTSSSLH), 209-229 (NSNN…NNIT), 237-252 (TSSI…NTVH), and 949-960 (NAEIHESNSPNH). Residues 1368 to 1380 (RKNKINRGSKGKH) show a composition bias toward basic residues. Over residues 1415-1433 (SSSNYEEGNSSSNEENNIS) the composition is skewed to low complexity. Positions 1434 to 1445 (TDKNISNTNNKN) are enriched in polar residues. A compositionally biased stretch (low complexity) spans 1939 to 1993 (KVNDSNNSNDANEGNNANYSNDSSNTNNNTSSSTNNSNNNTSCSSQNTTTSSENN). 2 stretches are compositionally biased toward basic and acidic residues: residues 2012-2021 (KDTQKEKNNL) and 2029-2046 (YEDR…QDKF). Over residues 2115–2126 (TNESIKTNSDQN) the composition is skewed to polar residues. A compositionally biased stretch (low complexity) spans 2139–2160 (MNNDNYNSSYDNVHNDNDNNMV). Positions 2163-2177 (DSSRQDNMEKQKSGE) are enriched in basic and acidic residues. Residues 2192–2201 (NDNDNDDNND) show a composition bias toward acidic residues. 3 stretches are compositionally biased toward low complexity: residues 2202 to 2216 (NDNN…QYNY), 2602 to 2630 (NDNN…YSYD), and 2959 to 2989 (QQNN…QKNN). A compositionally biased stretch (polar residues) spans 2990-3006 (LSEVQVSNINTPSSYNI). A DNA-binding region spans residues 2991–3078 (SEVQVSNINT…GKRRKNEDNK (88 aa)).

In terms of assembly, homodimer.

It is found in the nucleus. The protein resides in the chromosome. In terms of biological role, transcriptional regulator which binds to the DNA motifs 5'-GTGCACAC-3' (motif A) and 5'-[GTA]TGTA[CT][GA]TAC-3' (motif B) of genes essential for early gametocyte development, including those critical for the expansion of the inner membrane complex (IMC). The chain is Homeobox-like protein HDP1 from Plasmodium falciparum (isolate NF54).